A 280-amino-acid chain; its full sequence is Probable ketoamine kinase lp_1983 (280 aa).

Residue 87-89 coordinates ATP; it reads DWL. Catalysis depends on Asp189, which acts as the Proton acceptor.

Belongs to the fructosamine kinase family.

The enzyme catalyses N(6)-(D-ribulosyl)-L-lysine + ATP = N(6)-(3-O-phospho-D-ribulosyl)-L-lysine + ADP + H(+). It carries out the reaction N-(D-ribulosyl)-cadaverine + ATP = N-(3-O-phospho-D-ribulosyl)-cadaverine + ADP + H(+). It catalyses the reaction N(6)-(D-erythrulosyl)-L-lysine + ATP = N(6)-(3-O-phospho-D-erythrulosyl)-L-lysine + ADP + H(+). The catalysed reaction is N-(D-erythrulosyl)-cadaverine + ATP = N-(3-O-phospho-D-erythrulosyl)-cadaverine + ADP + H(+). The enzyme catalyses N(6)-D-ribulosyl-L-lysyl-[protein] + ATP = N(6)-(3-O-phospho-D-ribulosyl)-L-lysyl-[protein] + ADP + H(+). It carries out the reaction N(6)-(D-erythrulosyl)-L-lysyl-[protein] + ATP = N(6)-(3-O-phospho-D-erythrulosyl)-L-lysyl-[protein] + ADP + H(+). Its function is as follows. Ketoamine kinase that phosphorylates ketoamines, such as erythruloselysine, erythrulosecadaverine, ribuloselysine and ribulosecadaverine, on the third carbon of the sugar moiety to generate ketoamine 3-phosphate. Has higher activity on free lysine (erythruloselysine and ribuloselysine), than on ribuloselysine and erythruloselysine residues on glycated proteins. This chain is Probable ketoamine kinase lp_1983, found in Lactiplantibacillus plantarum (strain ATCC BAA-793 / NCIMB 8826 / WCFS1) (Lactobacillus plantarum).